We begin with the raw amino-acid sequence, 155 residues long: Endoribonuclease YbeY (155 aa).

Positions 114, 118, and 124 each coordinate Zn(2+).

This sequence belongs to the endoribonuclease YbeY family. Requires Zn(2+) as cofactor.

It is found in the cytoplasm. Its function is as follows. Single strand-specific metallo-endoribonuclease involved in late-stage 70S ribosome quality control and in maturation of the 3' terminus of the 16S rRNA. The polypeptide is Endoribonuclease YbeY (Escherichia coli O17:K52:H18 (strain UMN026 / ExPEC)).